The following is a 192-amino-acid chain: Protein GrpE (192 aa).

Residues M1 to E43 are disordered.

This sequence belongs to the GrpE family. As to quaternary structure, homodimer.

It localises to the cytoplasm. Participates actively in the response to hyperosmotic and heat shock by preventing the aggregation of stress-denatured proteins, in association with DnaK and GrpE. It is the nucleotide exchange factor for DnaK and may function as a thermosensor. Unfolded proteins bind initially to DnaJ; upon interaction with the DnaJ-bound protein, DnaK hydrolyzes its bound ATP, resulting in the formation of a stable complex. GrpE releases ADP from DnaK; ATP binding to DnaK triggers the release of the substrate protein, thus completing the reaction cycle. Several rounds of ATP-dependent interactions between DnaJ, DnaK and GrpE are required for fully efficient folding. The polypeptide is Protein GrpE (Aromatoleum aromaticum (strain DSM 19018 / LMG 30748 / EbN1) (Azoarcus sp. (strain EbN1))).